The sequence spans 378 residues: Erythronate-4-phosphate dehydrogenase (378 aa).

Positions 45 and 66 each coordinate substrate. The NAD(+) site is built by Asp-142 and Thr-169. Residue Arg-202 is part of the active site. Residue Asp-226 participates in NAD(+) binding. Glu-231 is a catalytic residue. The active-site Proton donor is His-248. Gly-251 contributes to the NAD(+) binding site. Substrate is bound at residue Tyr-252.

It belongs to the D-isomer specific 2-hydroxyacid dehydrogenase family. PdxB subfamily. Homodimer.

It is found in the cytoplasm. It carries out the reaction 4-phospho-D-erythronate + NAD(+) = (R)-3-hydroxy-2-oxo-4-phosphooxybutanoate + NADH + H(+). The protein operates within cofactor biosynthesis; pyridoxine 5'-phosphate biosynthesis; pyridoxine 5'-phosphate from D-erythrose 4-phosphate: step 2/5. Functionally, catalyzes the oxidation of erythronate-4-phosphate to 3-hydroxy-2-oxo-4-phosphonooxybutanoate. The sequence is that of Erythronate-4-phosphate dehydrogenase from Cellvibrio japonicus (strain Ueda107) (Pseudomonas fluorescens subsp. cellulosa).